Reading from the N-terminus, the 790-residue chain is LPS-assembly protein LptD (790 aa).

Residues 1 to 20 (MRMLRWLILSAFSVAGAVQA) form the signal peptide.

It belongs to the LptD family. As to quaternary structure, component of the lipopolysaccharide transport and assembly complex. Interacts with LptE and LptA.

It localises to the cell outer membrane. Functionally, together with LptE, is involved in the assembly of lipopolysaccharide (LPS) at the surface of the outer membrane. The protein is LPS-assembly protein LptD of Bordetella pertussis (strain Tohama I / ATCC BAA-589 / NCTC 13251).